The sequence spans 179 residues: Exosome complex component Csl4 (179 aa).

An S1 motif domain is found at 58–137; the sequence is GDVVLGRVVD…RLSTKEEEMG (80 aa). Positions 143, 146, 159, and 162 each coordinate Zn(2+).

It belongs to the CSL4 family. Component of the archaeal exosome complex. Forms a trimer of Rrp4 and/or Csl4 subunits. The trimer associates with a hexameric ring-like arrangement composed of 3 Rrp41-Rrp42 heterodimers. Interacts with DnaG.

It is found in the cytoplasm. Functionally, non-catalytic component of the exosome, which is a complex involved in RNA degradation. Increases the RNA binding and the efficiency of RNA degradation. Helpful for the interaction of the exosome with A-poor RNAs. The protein is Exosome complex component Csl4 of Archaeoglobus fulgidus (strain ATCC 49558 / DSM 4304 / JCM 9628 / NBRC 100126 / VC-16).